A 319-amino-acid chain; its full sequence is MAENKITGKVHFLQCLKQTIAYLTYLNRRIKHDRLTIAAGSMAYVTLLSLVPMITVVLAALSAFPVFAGLGELLQNFVIENFVPAAGEVVKTYLNEFVANAGKMTAVGIGALFVVAMMLMSSIDHALNYIWRVHEKRRPVISFSIYWMVLTLGPILVGSSIAVSSYLGSLNLLNSEAVNGLFQQTLRALPVIMSSSAFLGLYLLVPNLKVKFSHALLGALVASSLFELSKKGFALYISNFPSYQVIYGALAVIPILFVWVYLCWCIVLLGAEITASLGERKQWQLSSGEPITSKDCDVKVMAKNEQEKSSEAENNKGTK.

6 helical membrane passes run 50–70 (LVPMITVVLAALSAFPVFAGL), 107–127 (VGIGALFVVAMMLMSSIDHAL), 143–163 (FSIYWMVLTLGPILVGSSIAV), 188–208 (ALPVIMSSSAFLGLYLLVPNL), 215–235 (ALLGALVASSLFELSKKGFAL), and 249–269 (ALAVIPILFVWVYLCWCIVLL).

Belongs to the UPF0761 family.

Its subcellular location is the cell inner membrane. This is UPF0761 membrane protein PBPRA3489 from Photobacterium profundum (strain SS9).